Reading from the N-terminus, the 213-residue chain is ATP synthase peripheral stalk subunit OSCP, mitochondrial (213 aa).

The N-terminal 23 residues, 1–23 (MAAPATSVLSRQVRSFSTSVVRP), are a transit peptide targeting the mitochondrion. The short motif at 5–23 (ATSVLSRQVRSFSTSVVRP) is the SIFI-degron element. An N6-acetyllysine mark is found at Lys60, Lys70, and Lys73. Position 90 is an N6-succinyllysine (Lys90). Residues Lys100 and Lys158 each carry the N6-acetyllysine; alternate modification. An N6-succinyllysine; alternate mark is found at Lys100 and Lys158. An N6-acetyllysine mark is found at Lys176 and Lys192. Position 199 is an N6-succinyllysine (Lys199).

The protein belongs to the ATPase delta chain family. As to quaternary structure, component of the ATP synthase complex composed at least of ATP5F1A/subunit alpha, ATP5F1B/subunit beta, ATP5MC1/subunit c (homooctomer), MT-ATP6/subunit a, MT-ATP8/subunit 8, ATP5ME/subunit e, ATP5MF/subunit f, ATP5MG/subunit g, ATP5MK/subunit k, ATP5MJ/subunit j, ATP5F1C/subunit gamma, ATP5F1D/subunit delta, ATP5F1E/subunit epsilon, ATP5PF/subunit F6, ATP5PB/subunit b, ATP5PD/subunit d, ATP5PO/subunit OSCP. ATP synthase complex consists of a soluble F(1) head domain (subunits alpha(3) and beta(3)) - the catalytic core - and a membrane F(0) domain - the membrane proton channel (subunits c, a, 8, e, f, g, k and j). These two domains are linked by a central stalk (subunits gamma, delta, and epsilon) rotating inside the F1 region and a stationary peripheral stalk (subunits F6, b, d, and OSCP). Post-translationally, in response to mitochondrial stress, the precursor protein is ubiquitinated by the SIFI complex in the cytoplasm before mitochondrial import, leading to its degradation. Within the SIFI complex, UBR4 initiates ubiquitin chain that are further elongated or branched by KCMF1. As to expression, expressed by the principal cells of the epididymis. Detected in flagella of epididymal sperm (at protein level).

Its subcellular location is the mitochondrion. It is found in the mitochondrion inner membrane. Functionally, subunit OSCP, of the mitochondrial membrane ATP synthase complex (F(1)F(0) ATP synthase or Complex V) that produces ATP from ADP in the presence of a proton gradient across the membrane which is generated by electron transport complexes of the respiratory chain. ATP synthase complex consist of a soluble F(1) head domain - the catalytic core - and a membrane F(1) domain - the membrane proton channel. These two domains are linked by a central stalk rotating inside the F(1) region and a stationary peripheral stalk. During catalysis, ATP synthesis in the catalytic domain of F(1) is coupled via a rotary mechanism of the central stalk subunits to proton translocation. In vivo, can only synthesize ATP although its ATP hydrolase activity can be activated artificially in vitro. Part of the complex F(0) domain. Part of the complex F(0) domain and the peripheric stalk, which acts as a stator to hold the catalytic alpha(3)beta(3) subcomplex and subunit a/ATP6 static relative to the rotary elements. This Rattus norvegicus (Rat) protein is ATP synthase peripheral stalk subunit OSCP, mitochondrial.